We begin with the raw amino-acid sequence, 610 residues long: Diol dehydratase-reactivating factor large subunit (610 aa).

11 to 13 (NSS) is an ATP binding site. 3 residues coordinate Mg(2+): threonine 105, aspartate 166, and aspartate 183. ATP-binding positions include 459 to 462 (EEIK), 557 to 558 (GS), and arginine 591.

It belongs to the DdrA/PduG family. As to quaternary structure, component of the DDR complex, a heterotetramer of DdrA(2)/DdrB(2). The DDR complex interacts with the diol dehydratase complex in the presence of ADP but not ATP. Requires Mg(2+) as cofactor.

It carries out the reaction ATP + H2O = ADP + phosphate + H(+). Large subunit of the diol dehydratase-reactivating factor (DDR), which reactivates suicidally inhibited adenosylcobalamin-dependent diol dehydratase (DD, pddA, pddB, pddC). DDR acts as a chaperone, reactivating inactivated DD holoenzyme in the presence of ATP, Mg(2+) and free adenosylcobalamin (AdoCbl), by mediating the exchange of the tightly bound damaged cofactor AdoCbl for a free intact one. Reactivation takes place in two steps: ADP-dependent cobalamin release, then ATP-dependent dissociation of the DD apoenzyme-DDR complex. DDR has weak ATPase activity which is required for DD reactivation. This subunit contains the adenosine nucleotide binding site. Activates glycerol-inactivated, O2-inactivated holoenzyme and inactivated enzyme-cyanocobalamin complex. Also reactivates glycerol-inactivated hologlycerol dehydratase, a DD isozyme. The polypeptide is Diol dehydratase-reactivating factor large subunit (Klebsiella michiganensis (strain ATCC 8724 / DSM 4798 / JCM 20051 / NBRC 3318 / NRRL B-199 / KCTC 1686 / BUCSAV 143 / CCM 1901)).